A 110-amino-acid chain; its full sequence is Serum amyloid A protein (110 aa).

A disordered region spans residues 73 to 110; that stretch reads GGSGRGAEDSRADQAANEWGRSGKDPNHFRPHGLPDKY. The span at 93–110 shows a compositional bias: basic and acidic residues; the sequence is RSGKDPNHFRPHGLPDKY.

The protein belongs to the SAA family. Post-translationally, this protein is the precursor of amyloid protein A, which is formed by the removal of residues from the C-terminal end. In terms of tissue distribution, expressed by the liver; secreted in plasma.

In terms of biological role, major acute phase reactant. Apolipoprotein of the HDL complex. In Equus caballus (Horse), this protein is Serum amyloid A protein (SAA1).